The following is a 112-amino-acid chain: Probable fatty acid-binding protein (112 aa).

It belongs to the calycin superfamily. Fatty-acid binding protein (FABP) family.

The polypeptide is Probable fatty acid-binding protein (Anopheles gambiae (African malaria mosquito)).